Here is a 34-residue protein sequence, read N- to C-terminus: Potassium channel toxin alpha-KTx 6.13 (34 aa).

4 cysteine pairs are disulfide-bonded: Cys-3–Cys-24, Cys-9–Cys-29, Cys-13–Cys-31, and Cys-19–Cys-34. Residue Cys-34 is modified to Cysteine amide.

Belongs to the short scorpion toxin superfamily. Potassium channel inhibitor family. Alpha-KTx 06 subfamily. In terms of tissue distribution, expressed by the venom gland.

It localises to the secreted. Its function is as follows. Antagonist of Kv1/KCNA potassium channels. Shows a weak interaction with muscle-type nicotinic acetylcholine receptors (nAChR), since it inhibits alpha-bungarotoxin binding to both muscle-type nAChR from T.californica (IC(50)=490 nM). This suggests it probably weakly inhibits nAChR. This chain is Potassium channel toxin alpha-KTx 6.13, found in Heterometrus spinifer (Asia giant forest scorpion).